The sequence spans 444 residues: Tol-Pal system protein TolB (444 aa).

An N-terminal signal peptide occupies residues 1 to 19; sequence MRNIIYFILSLLFSVTSYA.

This sequence belongs to the TolB family. In terms of assembly, the Tol-Pal system is composed of five core proteins: the inner membrane proteins TolA, TolQ and TolR, the periplasmic protein TolB and the outer membrane protein Pal. They form a network linking the inner and outer membranes and the peptidoglycan layer.

It is found in the periplasm. Its function is as follows. Part of the Tol-Pal system, which plays a role in outer membrane invagination during cell division and is important for maintaining outer membrane integrity. The protein is Tol-Pal system protein TolB of Rickettsia africae (strain ESF-5).